An 856-amino-acid chain; its full sequence is DNA mismatch repair protein MutS (856 aa).

Residue glycine 618 to serine 625 participates in ATP binding.

This sequence belongs to the DNA mismatch repair MutS family.

In terms of biological role, this protein is involved in the repair of mismatches in DNA. It is possible that it carries out the mismatch recognition step. This protein has a weak ATPase activity. In Shewanella baltica (strain OS155 / ATCC BAA-1091), this protein is DNA mismatch repair protein MutS.